We begin with the raw amino-acid sequence, 320 residues long: ATP-dependent 6-phosphofructokinase (320 aa).

An ATP-binding site is contributed by Gly-12. 22–26 contributes to the ADP binding site; it reads RAVVR. Residues 73-74 and 103-106 contribute to the ATP site; these read RF and GDGS. Asp-104 contacts Mg(2+). 126 to 128 serves as a coordination point for substrate; it reads TID. Catalysis depends on Asp-128, which acts as the Proton acceptor. An ADP-binding site is contributed by Arg-155. Residues Arg-163 and 170-172 contribute to the substrate site; that span reads MGR. ADP-binding positions include 186–188 and 214–216; these read GAE and KNH. Substrate is bound by residues Glu-223, Arg-244, and 250-253; that span reads HIQR.

This sequence belongs to the phosphofructokinase type A (PFKA) family. ATP-dependent PFK group I subfamily. Prokaryotic clade 'B1' sub-subfamily. In terms of assembly, homotetramer. Requires Mg(2+) as cofactor.

It is found in the cytoplasm. It catalyses the reaction beta-D-fructose 6-phosphate + ATP = beta-D-fructose 1,6-bisphosphate + ADP + H(+). The protein operates within carbohydrate degradation; glycolysis; D-glyceraldehyde 3-phosphate and glycerone phosphate from D-glucose: step 3/4. With respect to regulation, allosterically activated by ADP and other diphosphonucleosides, and allosterically inhibited by phosphoenolpyruvate. Its function is as follows. Catalyzes the phosphorylation of D-fructose 6-phosphate to fructose 1,6-bisphosphate by ATP, the first committing step of glycolysis. This is ATP-dependent 6-phosphofructokinase from Teredinibacter turnerae (strain ATCC 39867 / T7901).